A 548-amino-acid polypeptide reads, in one-letter code: Beta-lactamase-like protein 2 (548 aa).

The signal sequence occupies residues 1–24 (MKIMNKQSITIFLIICFLINLILS). Residues Asn237, Asn258, Asn443, and Asn459 are each glycosylated (N-linked (GlcNAc...) asparagine).

The protein belongs to the beta-lactamase family.

The protein localises to the secreted. This is Beta-lactamase-like protein 2 from Dictyostelium discoideum (Social amoeba).